The following is a 291-amino-acid chain: Nucleotide-binding protein lwe2422 (291 aa).

An ATP-binding site is contributed by 13–20; the sequence is GMSGAGKT. 63 to 66 provides a ligand contact to GTP; sequence DLRG.

Belongs to the RapZ-like family.

In terms of biological role, displays ATPase and GTPase activities. The sequence is that of Nucleotide-binding protein lwe2422 from Listeria welshimeri serovar 6b (strain ATCC 35897 / DSM 20650 / CCUG 15529 / CIP 8149 / NCTC 11857 / SLCC 5334 / V8).